The sequence spans 216 residues: UPF0502 protein Spea_2482 (216 aa).

It belongs to the UPF0502 family.

The protein is UPF0502 protein Spea_2482 of Shewanella pealeana (strain ATCC 700345 / ANG-SQ1).